Reading from the N-terminus, the 333-residue chain is Holliday junction branch migration complex subunit RuvB (333 aa).

Residues methionine 1 to tyrosine 182 are large ATPase domain (RuvB-L). ATP contacts are provided by residues leucine 21, arginine 22, glycine 63, lysine 66, threonine 67, threonine 68, glutamate 129–phenylalanine 131, arginine 172, tyrosine 182, and arginine 219. Threonine 67 is a binding site for Mg(2+). The interval threonine 183–glutamine 253 is small ATPAse domain (RuvB-S). The segment at lysine 256–valine 333 is head domain (RuvB-H). Residues arginine 311 and arginine 316 each contribute to the DNA site.

Belongs to the RuvB family. Homohexamer. Forms an RuvA(8)-RuvB(12)-Holliday junction (HJ) complex. HJ DNA is sandwiched between 2 RuvA tetramers; dsDNA enters through RuvA and exits via RuvB. An RuvB hexamer assembles on each DNA strand where it exits the tetramer. Each RuvB hexamer is contacted by two RuvA subunits (via domain III) on 2 adjacent RuvB subunits; this complex drives branch migration. In the full resolvosome a probable DNA-RuvA(4)-RuvB(12)-RuvC(2) complex forms which resolves the HJ.

The protein resides in the cytoplasm. It catalyses the reaction ATP + H2O = ADP + phosphate + H(+). In terms of biological role, the RuvA-RuvB-RuvC complex processes Holliday junction (HJ) DNA during genetic recombination and DNA repair, while the RuvA-RuvB complex plays an important role in the rescue of blocked DNA replication forks via replication fork reversal (RFR). RuvA specifically binds to HJ cruciform DNA, conferring on it an open structure. The RuvB hexamer acts as an ATP-dependent pump, pulling dsDNA into and through the RuvAB complex. RuvB forms 2 homohexamers on either side of HJ DNA bound by 1 or 2 RuvA tetramers; 4 subunits per hexamer contact DNA at a time. Coordinated motions by a converter formed by DNA-disengaged RuvB subunits stimulates ATP hydrolysis and nucleotide exchange. Immobilization of the converter enables RuvB to convert the ATP-contained energy into a lever motion, pulling 2 nucleotides of DNA out of the RuvA tetramer per ATP hydrolyzed, thus driving DNA branch migration. The RuvB motors rotate together with the DNA substrate, which together with the progressing nucleotide cycle form the mechanistic basis for DNA recombination by continuous HJ branch migration. Branch migration allows RuvC to scan DNA until it finds its consensus sequence, where it cleaves and resolves cruciform DNA. This chain is Holliday junction branch migration complex subunit RuvB, found in Bacillus cereus (strain 03BB102).